A 266-amino-acid polypeptide reads, in one-letter code: ATP synthase subunit a (266 aa).

The next 5 helical transmembrane spans lie at 28–48 (SINVDSMFFSIALGILFLVIF), 88–108 (LIAPLALTIFVWVFLMNLMDL), 141–161 (DVNITLSMALGVFILVLFYSI), 206–226 (LFGNMYAGELIFILIAGLLPW), and 237–257 (AIFHILIITLQAFIFMVLTVV).

Belongs to the ATPase A chain family. F-type ATPases have 2 components, CF(1) - the catalytic core - and CF(0) - the membrane proton channel. CF(1) has five subunits: alpha(3), beta(3), gamma(1), delta(1), epsilon(1). CF(0) has three main subunits: a(1), b(2) and c(9-12). The alpha and beta chains form an alternating ring which encloses part of the gamma chain. CF(1) is attached to CF(0) by a central stalk formed by the gamma and epsilon chains, while a peripheral stalk is formed by the delta and b chains.

Its subcellular location is the cell inner membrane. Functionally, key component of the proton channel; it plays a direct role in the translocation of protons across the membrane. This chain is ATP synthase subunit a, found in Pectobacterium carotovorum subsp. carotovorum (strain PC1).